Reading from the N-terminus, the 406-residue chain is Imidazolonepropionase (406 aa).

Fe(3+) contacts are provided by H72 and H74. The Zn(2+) site is built by H72 and H74. Positions 81, 144, and 177 each coordinate 4-imidazolone-5-propanoate. N-formimidoyl-L-glutamate is bound at residue Y144. H242 serves as a coordination point for Fe(3+). H242 provides a ligand contact to Zn(2+). A 4-imidazolone-5-propanoate-binding site is contributed by Q245. D317 contacts Fe(3+). Residue D317 coordinates Zn(2+). N-formimidoyl-L-glutamate contacts are provided by N319 and G321. T322 contributes to the 4-imidazolone-5-propanoate binding site.

Belongs to the metallo-dependent hydrolases superfamily. HutI family. Zn(2+) is required as a cofactor. Requires Fe(3+) as cofactor.

Its subcellular location is the cytoplasm. It carries out the reaction 4-imidazolone-5-propanoate + H2O = N-formimidoyl-L-glutamate. Its pathway is amino-acid degradation; L-histidine degradation into L-glutamate; N-formimidoyl-L-glutamate from L-histidine: step 3/3. Catalyzes the hydrolytic cleavage of the carbon-nitrogen bond in imidazolone-5-propanoate to yield N-formimidoyl-L-glutamate. It is the third step in the universal histidine degradation pathway. The protein is Imidazolonepropionase of Yersinia enterocolitica serotype O:8 / biotype 1B (strain NCTC 13174 / 8081).